A 78-amino-acid chain; its full sequence is Acyl carrier protein (78 aa).

In terms of domain architecture, Carrier spans serine 2–glutamine 77. Residue serine 37 is modified to O-(pantetheine 4'-phosphoryl)serine.

Belongs to the acyl carrier protein (ACP) family. Post-translationally, 4'-phosphopantetheine is transferred from CoA to a specific serine of apo-ACP by AcpS. This modification is essential for activity because fatty acids are bound in thioester linkage to the sulfhydryl of the prosthetic group.

Its subcellular location is the cytoplasm. It participates in lipid metabolism; fatty acid biosynthesis. Its function is as follows. Carrier of the growing fatty acid chain in fatty acid biosynthesis. In Tolumonas auensis (strain DSM 9187 / NBRC 110442 / TA 4), this protein is Acyl carrier protein.